The primary structure comprises 309 residues: NADH-quinone oxidoreductase subunit C (309 aa).

The tract at residues 198 to 309 (LPGDEKAVPP…RTRKKKEDGE (112 aa)) is disordered. Positions 220-230 (TKGDAKADVPK) are enriched in basic and acidic residues. Low complexity predominate over residues 246-261 (DAAAKPVAEAAAPAAT).

The protein belongs to the complex I 30 kDa subunit family. In terms of assembly, NDH-1 is composed of 14 different subunits. Subunits NuoB, C, D, E, F, and G constitute the peripheral sector of the complex.

It localises to the cell inner membrane. It catalyses the reaction a quinone + NADH + 5 H(+)(in) = a quinol + NAD(+) + 4 H(+)(out). In terms of biological role, NDH-1 shuttles electrons from NADH, via FMN and iron-sulfur (Fe-S) centers, to quinones in the respiratory chain. The immediate electron acceptor for the enzyme in this species is believed to be ubiquinone. Couples the redox reaction to proton translocation (for every two electrons transferred, four hydrogen ions are translocated across the cytoplasmic membrane), and thus conserves the redox energy in a proton gradient. This is NADH-quinone oxidoreductase subunit C from Novosphingobium aromaticivorans (strain ATCC 700278 / DSM 12444 / CCUG 56034 / CIP 105152 / NBRC 16084 / F199).